Reading from the N-terminus, the 303-residue chain is Mitochondrial basic amino acids transporter (303 aa).

Transmembrane regions (helical) follow at residues 2–22 (ALDF…GHPF), 61–81 (GLGS…GVQG), 96–116 (FLAG…MELA), 153–172 (GMVS…FLTY), 187–207 (LLVP…WLST), and 255–275 (LLRA…VLTY). Solcar repeat units follow at residues 2 to 86 (ALDF…TLRA), 90 to 178 (DSPL…LTRA), and 185 to 275 (DRLL…VLTY). The segment at 282-303 (GPEGEAVPAAPAGPALAQPSSL) is disordered. The segment covering 284–303 (EGEAVPAAPAGPALAQPSSL) has biased composition (low complexity).

Belongs to the mitochondrial carrier (TC 2.A.29) family.

The protein localises to the mitochondrion inner membrane. It carries out the reaction L-lysine(out) + L-arginine(in) = L-lysine(in) + L-arginine(out). The enzyme catalyses L-histidine(out) + L-arginine(in) = L-histidine(in) + L-arginine(out). It catalyses the reaction L-ornithine(in) + L-arginine(out) = L-ornithine(out) + L-arginine(in). The catalysed reaction is L-homoarginine(in) + L-arginine(out) = L-homoarginine(out) + L-arginine(in). It carries out the reaction N(omega)-methyl-L-arginine(in) + L-arginine(out) = N(omega)-methyl-L-arginine(out) + L-arginine(in). The enzyme catalyses L-arginine(in) = L-arginine(out). It catalyses the reaction L-lysine(in) = L-lysine(out). The catalysed reaction is L-ornithine(in) = L-ornithine(out). It carries out the reaction L-histidine(out) = L-histidine(in). Mitochondrial transporter of arginine, lysine, homoarginine, methylarginine and, to a much lesser extent, ornithine and histidine. Does not transport carnitine nor acylcarnitines. Functions by both counter-exchange and uniport mechanisms. Plays a physiological role in the import of basic amino acids into mitochondria for mitochondrial protein synthesis and amino acid degradation. This is Mitochondrial basic amino acids transporter from Homo sapiens (Human).